Reading from the N-terminus, the 276-residue chain is Small ribosomal subunit protein uS2 (276 aa).

A disordered region spans residues 226–276; the sequence is KKAREERQLAAAREAAGEPKSEDAPAEAAATEEAPATEAPAAEAQQENAAE. Residues 251-276 show a composition bias toward low complexity; it reads AEAAATEEAPATEAPAAEAQQENAAE.

It belongs to the universal ribosomal protein uS2 family.

This Corynebacterium efficiens (strain DSM 44549 / YS-314 / AJ 12310 / JCM 11189 / NBRC 100395) protein is Small ribosomal subunit protein uS2.